Consider the following 593-residue polypeptide: Probable metalloprotease ARX1 (593 aa).

Belongs to the peptidase M24 family. As to quaternary structure, component of the nucleoplasmic and cytoplasmic pre-60S ribosomal particles. Interacts directly with REI1.

The protein localises to the cytoplasm. It is found in the nucleus. Its function is as follows. Probable metalloprotease involved in proper assembly of pre-ribosomal particles during the biogenesis of the 60S ribosomal subunit. Accompanies the pre-60S particles to the cytoplasm. In Saccharomyces cerevisiae (strain ATCC 204508 / S288c) (Baker's yeast), this protein is Probable metalloprotease ARX1 (ARX1).